A 201-amino-acid polypeptide reads, in one-letter code: Recombination protein RecR (201 aa).

The segment at C57–C72 adopts a C4-type zinc-finger fold. A Toprim domain is found at G81–P176.

Belongs to the RecR family.

Functionally, may play a role in DNA repair. It seems to be involved in an RecBC-independent recombinational process of DNA repair. It may act with RecF and RecO. This chain is Recombination protein RecR, found in Pectobacterium carotovorum subsp. carotovorum (strain PC1).